A 293-amino-acid polypeptide reads, in one-letter code: MSGVDQIVKTFADLAEDDREAAMRAFSRMMRRGTEPVRRIPAAKKKVNGFMGFRSYYSPLFSQLPQKERSPFMTILWQHDPFHNEWDFMCSVYSSIRTYLEQEKVTLQLWIHYAVGHLGVIIRDNYMASFGWNLVRFPNGTHDLERTALPLVQHNLQPMNGLCLLTKCLESGLPLANPHSVIAKLSDPSYDMIWFNKRPHRQQGHAVQTDESEVGVSAMFPRNHTVAAEVDGIINLPLSHWIQQGEFGTESGYSAQFETLLDSILENGHASSNDPYNMALAIDVPMMGFNGGA.

The segment at residues 42 to 97 is a DNA-binding region (alpha box); that stretch reads AAKKKVNGFMGFRSYYSPLFSQLPQKERSPFMTILWQHDPFHNEWDFMCSVYSSIR.

Belongs to the MATALPHA1 family.

It localises to the nucleus. In terms of biological role, mating type proteins are sequence specific DNA-binding proteins that act as master switches in yeast differentiation by controlling gene expression in a cell type-specific fashion. Transcriptional activator that induces the transcription of A-specific genes like mating factor ccg-4. Required for mating as an A-cell and for blocking of heterokaryon formation (vegetative incompatibility). The polypeptide is Mating-type protein A-1 (mtA-1) (Neurospora crassa (strain ATCC 24698 / 74-OR23-1A / CBS 708.71 / DSM 1257 / FGSC 987)).